Consider the following 388-residue polypeptide: Succinate--CoA ligase [ADP-forming] subunit beta (388 aa).

Residues 9-244 (KEIFRSMGVA…LEEEDPKEIE (236 aa)) enclose the ATP-grasp domain. ATP-binding positions include Lys-46, 53-55 (GRG), Glu-99, Cys-102, and Glu-107. Mg(2+)-binding residues include Asn-199 and Asp-213. Residues Asn-264 and 321–323 (GIM) contribute to the substrate site.

Belongs to the succinate/malate CoA ligase beta subunit family. Heterotetramer of two alpha and two beta subunits. It depends on Mg(2+) as a cofactor.

It carries out the reaction succinate + ATP + CoA = succinyl-CoA + ADP + phosphate. It catalyses the reaction GTP + succinate + CoA = succinyl-CoA + GDP + phosphate. Its pathway is carbohydrate metabolism; tricarboxylic acid cycle; succinate from succinyl-CoA (ligase route): step 1/1. Its function is as follows. Succinyl-CoA synthetase functions in the citric acid cycle (TCA), coupling the hydrolysis of succinyl-CoA to the synthesis of either ATP or GTP and thus represents the only step of substrate-level phosphorylation in the TCA. The beta subunit provides nucleotide specificity of the enzyme and binds the substrate succinate, while the binding sites for coenzyme A and phosphate are found in the alpha subunit. This chain is Succinate--CoA ligase [ADP-forming] subunit beta, found in Staphylococcus epidermidis (strain ATCC 35984 / DSM 28319 / BCRC 17069 / CCUG 31568 / BM 3577 / RP62A).